The sequence spans 260 residues: 3-dehydroquinate dehydratase (260 aa).

3-dehydroquinate contacts are provided by residues 50–52 (EWR) and arginine 86. Histidine 148 (proton donor/acceptor) is an active-site residue. Lysine 175 (schiff-base intermediate with substrate) is an active-site residue. Arginine 217, serine 236, and glutamine 240 together coordinate 3-dehydroquinate.

It belongs to the type-I 3-dehydroquinase family. As to quaternary structure, homodimer.

It catalyses the reaction 3-dehydroquinate = 3-dehydroshikimate + H2O. It functions in the pathway metabolic intermediate biosynthesis; chorismate biosynthesis; chorismate from D-erythrose 4-phosphate and phosphoenolpyruvate: step 3/7. Functionally, involved in the third step of the chorismate pathway, which leads to the biosynthesis of aromatic amino acids. Catalyzes the cis-dehydration of 3-dehydroquinate (DHQ) and introduces the first double bond of the aromatic ring to yield 3-dehydroshikimate. The chain is 3-dehydroquinate dehydratase from Aromatoleum aromaticum (strain DSM 19018 / LMG 30748 / EbN1) (Azoarcus sp. (strain EbN1)).